A 666-amino-acid polypeptide reads, in one-letter code: Putative cysteine-rich receptor-like protein kinase 31 (666 aa).

A signal peptide spans 1 to 23 (MCLNTLCAILCFVLTVSFGFVSA). Gnk2-homologous domains are found at residues 24–130 (QKCG…NNSF) and 136–245 (LEPT…GYKY). At 24–280 (QKCGESVFFR…PDGKKISTGV (257 aa)) the chain is on the extracellular side. 5 N-linked (GlcNAc...) asparagine glycosylation sites follow: N52, N62, N104, N127, and N151. A helical membrane pass occupies residues 281 to 301 (IVAIVVSAVIFVVLVALGLVI). The Cytoplasmic portion of the chain corresponds to 302 to 666 (WKRRQSYKTL…SASITRATPR (365 aa)). Positions 339–616 (FSRNNKLGQG…IFQMLTNSSI (278 aa)) constitute a Protein kinase domain. Residues 345-353 (LGQGGFGEV) and K367 contribute to the ATP site. Y412 bears the Phosphotyrosine mark. D464 (proton acceptor) is an active-site residue. S468 bears the Phosphoserine mark. T504 carries the phosphothreonine modification. Y512 is subject to Phosphotyrosine.

Belongs to the protein kinase superfamily. Ser/Thr protein kinase family. CRK subfamily.

It localises to the membrane. The catalysed reaction is L-seryl-[protein] + ATP = O-phospho-L-seryl-[protein] + ADP + H(+). It carries out the reaction L-threonyl-[protein] + ATP = O-phospho-L-threonyl-[protein] + ADP + H(+). This chain is Putative cysteine-rich receptor-like protein kinase 31 (CRK31), found in Arabidopsis thaliana (Mouse-ear cress).